A 449-amino-acid chain; its full sequence is Interferon-related developmental regulator 1 (449 aa).

Residues 1–10 (MPKNKKRNAP) are compositionally biased toward basic residues. Residues 1–42 (MPKNKKRNAPHRGGGGGGGSGAATSAATAGGPHRTVQPFSDE) are disordered. Residues 12-21 (RGGGGGGGSG) show a composition bias toward gly residues. The span at 22 to 31 (AATSAATAGG) shows a compositional bias: low complexity.

It belongs to the IFRD family. In terms of assembly, interacts with PSIP1/LEDGF.

Could play a role in regulating gene activity in the proliferative and/or differentiative pathways induced by NGF. May be an autocrine factor that attenuates or amplifies the initial ligand-induced signal. The polypeptide is Interferon-related developmental regulator 1 (Ifrd1) (Mus musculus (Mouse)).